We begin with the raw amino-acid sequence, 476 residues long: Growth/differentiation factor 10 (476 aa).

The N-terminal stretch at 1 to 29 (MAPGPARISLGSQLLPMVPLLLLLRGAGC) is a signal peptide. The propeptide occupies 30 to 366 (GHRGPSWSSL…EKTMQKARRR (337 aa)). The interval 39-63 (LPSAAAGLQGDRDSQQSPGDAAAAL) is disordered. Residues Asn114, Asn152, and Asn277 are each glycosylated (N-linked (GlcNAc...) asparagine). Positions 268-301 (GDFEPGAAPNSSADPRVRRAAQVSKPLQDNELPG) are disordered. Intrachain disulfides connect Cys374/Cys441, Cys403/Cys473, and Cys407/Cys475. Asn467 is a glycosylation site (N-linked (GlcNAc...) asparagine).

Belongs to the TGF-beta family. Homodimer or heterodimer. Can form a non-covalent complex of the mature region and the pro-region. Highly expressed in epididymal adipose tissue, brain, bone and aorta and to a lesser extent in liver and spleen. Expressed at higher levels in preadipocytes than in mature adipocytes. Strongly expressed in glial cells of the cerebellum.

The protein resides in the secreted. Functionally, growth factor involved in osteogenesis and adipogenesis. Plays an inhibitory role in the process of osteoblast differentiation via SMAD2/3 pathway. Plays an inhibitory role in the process of adipogenesis. This Mus musculus (Mouse) protein is Growth/differentiation factor 10.